Reading from the N-terminus, the 154-residue chain is RxLR effector protein PITG_12737 (154 aa).

Positions 1-16 (MRVYFILILAVATVSG) are cleaved as a signal peptide. Positions 42-58 (RLLRAELTTDETYPEER) match the RxLR-dEER motif.

Belongs to the RxLR effector family.

It is found in the secreted. It localises to the host nucleus. Its subcellular location is the host cytoplasm. Functionally, effector that enhances P.infestans colonization of Nicotiana benthamiana leaves. The chain is RxLR effector protein PITG_12737 from Phytophthora infestans (strain T30-4) (Potato late blight agent).